The following is a 328-amino-acid chain: Protein FAM76B (328 aa).

Positions 143 to 232 (KEQRKGLGSS…ITQSMDSGGT (90 aa)) are disordered. Low complexity predominate over residues 148–159 (GLGSSHSNSSSL). Residues 165-183 (QRHHHHHQHHRHGSSHHKI) are compositionally biased toward basic residues. The span at 185 to 201 (GNLSPEQDQGLWKQSIQ) shows a compositional bias: polar residues. Ser-188 carries the phosphoserine modification. Positions 203–213 (ETPKKKPKLET) are enriched in basic and acidic residues. Over residues 216–232 (SNGDSSSITQSMDSGGT) the composition is skewed to polar residues. Residues 237 to 316 (LISQLKEEVM…KQVAALSKGK (80 aa)) adopt a coiled-coil conformation.

The protein belongs to the FAM76 family. In terms of tissue distribution, highly expressed in hematopoietic and immune systems including in the thymus, spleen, kidney, and blood vessel.

Functionally, plays a role in hematopoiesis and immune system development, and participates in the inflammatory response. This Danio rerio (Zebrafish) protein is Protein FAM76B (fam76b).